The following is a 340-amino-acid chain: CMP-N-acetylneuraminate-beta-galactosamide-alpha-2,3-sialyltransferase 1 (340 aa).

Residues 1–13 are Cytoplasmic-facing; it reads MVTLRKRTLKVLT. A helical; Signal-anchor for type II membrane protein transmembrane segment spans residues 14-34; it reads FLVLFIFLTSFFLNYSHTMVA. The Lumenal segment spans residues 35–340; it reads TTWFPKQMVL…INKIRIFKGR (306 aa). Intrachain disulfides connect Cys59–Cys64, Cys61–Cys139, and Cys142–Cys281. N-linked (GlcNAc...) asparagine glycosylation is present at Asn79. Gln105 contacts substrate. Asn114 carries N-linked (GlcNAc...) asparagine glycosylation. Residues Asn147 and Asn170 each coordinate substrate. Residue Asn201 is glycosylated (N-linked (GlcNAc...) asparagine). Positions 230, 266, 270, 290, 299, and 316 each coordinate substrate. Asn323 is a glycosylation site (N-linked (GlcNAc...) asparagine).

It belongs to the glycosyltransferase 29 family. The soluble form derives from the membrane form by proteolytic processing.

Its subcellular location is the golgi apparatus. It is found in the golgi stack membrane. The protein resides in the trans-Golgi network membrane. It localises to the secreted. It catalyses the reaction a beta-D-galactosyl-(1-&gt;3)-N-acetyl-alpha-D-galactosaminyl derivative + CMP-N-acetyl-beta-neuraminate = an N-acetyl-alpha-neuraminyl-(2-&gt;3)-beta-D-galactosyl-(1-&gt;3)-N-acetyl-alpha-D-galactosaminyl derivative + CMP + H(+). The catalysed reaction is a ganglioside GM1 + CMP-N-acetyl-beta-neuraminate = a ganglioside GD1a + CMP + H(+). The enzyme catalyses a ganglioside GM1 (d18:1(4E)) + CMP-N-acetyl-beta-neuraminate = a ganglioside GD1a (d18:1(4E)) + CMP + H(+). It carries out the reaction ganglioside GM1 (d18:1(4E)/18:0) + CMP-N-acetyl-beta-neuraminate = ganglioside GD1a (18:1(4E)/18:0) + CMP + H(+). It catalyses the reaction a ganglioside GA1 + CMP-N-acetyl-beta-neuraminate = a ganglioside GM1b + CMP + H(+). The catalysed reaction is a ganglioside GA1 (d18:1(4E)) + CMP-N-acetyl-beta-neuraminate = a ganglioside GM1b (d18:1(4E)) + CMP + H(+). The enzyme catalyses a ganglioside GD1b + CMP-N-acetyl-beta-neuraminate = a ganglioside GT1b + CMP + H(+). It carries out the reaction a 3-O-[beta-D-galactosyl-(1-&gt;3)-N-acetyl-alpha-D-galactosaminyl]-L-threonyl-[protein] + CMP-N-acetyl-beta-neuraminate = a 3-O-[N-acetyl-alpha-neuraminyl-(2-&gt;3)-beta-D-galactosyl-(1-&gt;3)-N-acetyl-alpha-D-galactosaminyl]-L-threonyl-[protein] + CMP + H(+). It catalyses the reaction a 3-O-[beta-D-galactosyl-(1-&gt;3)-N-acetyl-alpha-D-galactosaminyl]-L-seryl-[protein] + CMP-N-acetyl-beta-neuraminate = 3-O-[N-acetyl-alpha-neuraminyl-(2-&gt;3)-beta-D-galactosyl-(1-&gt;3)-N-acetyl-alpha-D-galactosaminyl]-L-seryl-[protein] + CMP + H(+). It functions in the pathway protein modification; protein glycosylation. The protein operates within glycolipid biosynthesis. Its function is as follows. A beta-galactoside alpha2-&gt;3 sialyltransferase involved in terminal sialylation of glycoproteins and glycolipids. Catalyzes the transfer of sialic acid (N-acetyl-neuraminic acid; Neu5Ac) from the nucleotide sugar donor CMP-Neu5Ac onto acceptor Galbeta-(1-&gt;3)-GalNAc-terminated glycoconjugates through an alpha2-3 linkage. Adds sialic acid to the core 1 O-glycan, Galbeta-(1-&gt;3)-GalNAc-O-Ser/Thr, which is a major structure of mucin-type O-glycans. As part of a homeostatic mechanism that regulates CD8-positive T cell numbers, sialylates core 1 O-glycans of T cell glycoproteins, SPN/CD43 and PTPRC/CD45. Prevents premature apoptosis of thymic CD8-positive T cells prior to peripheral emigration, whereas in the secondary lymphoid organs controls the survival of CD8-positive memory T cells generated following a successful immune response. Transfers sialic acid to asialofetuin, presumably onto Galbeta-(1-&gt;3)-GalNAc-O-Ser. Sialylates GM1a, GA1 and GD1b gangliosides to form GD1a, GM1b and GT1b, respectively. This Pan troglodytes (Chimpanzee) protein is CMP-N-acetylneuraminate-beta-galactosamide-alpha-2,3-sialyltransferase 1 (ST3GAL1).